Consider the following 31-residue polypeptide: AGNAKMSALMALTIRGCCSHPVCSAMSPICG.

Positions 1 to 15 (AGNAKMSALMALTIR) are excised as a propeptide. 2 disulfide bridges follow: cysteine 17–cysteine 23 and cysteine 18–cysteine 30. At cysteine 30 the chain carries Cysteine amide.

Belongs to the conotoxin A superfamily. In terms of tissue distribution, expressed by the venom duct.

The protein localises to the secreted. Functionally, alpha-conotoxins act on postsynaptic membranes, they bind to the nicotinic acetylcholine receptors (nAChR) and thus inhibit them. This toxin inhibits alpha-3-beta-4, alpha-6/alpha-3-beta-4, and alpha-2-beta-4 nAChRs. In Conus lividus (Livid cone), this protein is Alpha-conotoxin Li1.12.